A 368-amino-acid chain; its full sequence is MNNKCKIINRRKSDRIYVGKVAIGNNAPISVQSMTNTRTTNISETINQILELQKVGVDIVRISIPNLKAAESFKEIKKQTNVPLIADIHFDYRLALQAIKYGADCLRINPGNIGNKRRVSEIISYAKDENIPIRIGVNAGSLEKDILKKYKIPTPDALVESAMRHIEYFDALNFNQFKVSVKASDVFLAIESYRMLGKKITQPLHIGITESGGLRNGTVKSSIGIALLLLEGIGDTIRVSLAAHPTEEVKVGYDILKVLSLRARGINFIACPTCSRQEFDVINTVNQLEKNLEDISTPIDVSIIGCVVNGIGESKIATLGLAGSHKKSAFYEDGVRQKEKIKNEEIIEKMEIKIRKKIDKLNNSKKNN.

Residues Cys271, Cys274, Cys306, and Glu313 each contribute to the [4Fe-4S] cluster site.

It belongs to the IspG family. It depends on [4Fe-4S] cluster as a cofactor.

It catalyses the reaction (2E)-4-hydroxy-3-methylbut-2-enyl diphosphate + oxidized [flavodoxin] + H2O + 2 H(+) = 2-C-methyl-D-erythritol 2,4-cyclic diphosphate + reduced [flavodoxin]. The protein operates within isoprenoid biosynthesis; isopentenyl diphosphate biosynthesis via DXP pathway; isopentenyl diphosphate from 1-deoxy-D-xylulose 5-phosphate: step 5/6. Its function is as follows. Converts 2C-methyl-D-erythritol 2,4-cyclodiphosphate (ME-2,4cPP) into 1-hydroxy-2-methyl-2-(E)-butenyl 4-diphosphate. The polypeptide is 4-hydroxy-3-methylbut-2-en-1-yl diphosphate synthase (flavodoxin) (Buchnera aphidicola subsp. Acyrthosiphon pisum (strain APS) (Acyrthosiphon pisum symbiotic bacterium)).